The sequence spans 161 residues: Allophycocyanin beta chain (161 aa).

N4-methylasparagine is present on N71. C81 is a binding site for (2R,3E)-phycocyanobilin.

This sequence belongs to the phycobiliprotein family. In terms of assembly, heterodimer of an alpha and a beta chain. Post-translationally, contains one covalently linked phycocyanobilin chromophore.

Its subcellular location is the plastid. It localises to the chloroplast thylakoid membrane. Its function is as follows. Light-harvesting photosynthetic bile pigment-protein from the phycobiliprotein complex. Allophycocyanin has a maximum absorption at approximately 650 nanometers. This Cyanidium caldarium (Red alga) protein is Allophycocyanin beta chain (apcB).